Here is a 322-residue protein sequence, read N- to C-terminus: Ribose-phosphate pyrophosphokinase (322 aa).

Residues aspartate 43–glutamate 45 and arginine 102–glutamine 103 contribute to the ATP site. Mg(2+) is bound by residues histidine 137 and aspartate 177. The active site involves lysine 201. Residues arginine 203, aspartate 227, and aspartate 231 to threonine 235 contribute to the D-ribose 5-phosphate site.

Belongs to the ribose-phosphate pyrophosphokinase family. Class I subfamily. In terms of assembly, homohexamer. The cofactor is Mg(2+).

The protein resides in the cytoplasm. The catalysed reaction is D-ribose 5-phosphate + ATP = 5-phospho-alpha-D-ribose 1-diphosphate + AMP + H(+). It participates in metabolic intermediate biosynthesis; 5-phospho-alpha-D-ribose 1-diphosphate biosynthesis; 5-phospho-alpha-D-ribose 1-diphosphate from D-ribose 5-phosphate (route I): step 1/1. Its function is as follows. Involved in the biosynthesis of the central metabolite phospho-alpha-D-ribosyl-1-pyrophosphate (PRPP) via the transfer of pyrophosphoryl group from ATP to 1-hydroxyl of ribose-5-phosphate (Rib-5-P). This is Ribose-phosphate pyrophosphokinase from Xylella fastidiosa (strain 9a5c).